A 456-amino-acid chain; its full sequence is Phosphomethylpyrimidine synthase (456 aa).

Residues asparagine 80, methionine 109, tyrosine 139, histidine 175, 195–197 (SRG), 236–239 (DSLR), and glutamate 275 each bind substrate. Histidine 279 provides a ligand contact to Zn(2+). Residue tyrosine 302 coordinates substrate. Residue histidine 343 participates in Zn(2+) binding. 3 residues coordinate [4Fe-4S] cluster: cysteine 423, cysteine 426, and cysteine 431.

This sequence belongs to the ThiC family. It depends on [4Fe-4S] cluster as a cofactor.

It catalyses the reaction 5-amino-1-(5-phospho-beta-D-ribosyl)imidazole + S-adenosyl-L-methionine = 4-amino-2-methyl-5-(phosphooxymethyl)pyrimidine + CO + 5'-deoxyadenosine + formate + L-methionine + 3 H(+). It functions in the pathway cofactor biosynthesis; thiamine diphosphate biosynthesis. Its function is as follows. Catalyzes the synthesis of the hydroxymethylpyrimidine phosphate (HMP-P) moiety of thiamine from aminoimidazole ribotide (AIR) in a radical S-adenosyl-L-methionine (SAM)-dependent reaction. The polypeptide is Phosphomethylpyrimidine synthase (Prochlorococcus marinus (strain AS9601)).